The sequence spans 628 residues: tRNA uridine 5-carboxymethylaminomethyl modification enzyme MnmG (628 aa).

FAD-binding positions include 14–19 (GAGHAG), Val-126, and Ser-181. Residue 273 to 287 (GPRYCPSIEDKVVRF) coordinates NAD(+). An FAD-binding site is contributed by Gln-370.

This sequence belongs to the MnmG family. In terms of assembly, homodimer. Heterotetramer of two MnmE and two MnmG subunits. FAD serves as cofactor.

The protein resides in the cytoplasm. NAD-binding protein involved in the addition of a carboxymethylaminomethyl (cmnm) group at the wobble position (U34) of certain tRNAs, forming tRNA-cmnm(5)s(2)U34. In Pelobacter propionicus (strain DSM 2379 / NBRC 103807 / OttBd1), this protein is tRNA uridine 5-carboxymethylaminomethyl modification enzyme MnmG.